The sequence spans 751 residues: Diamine oxidase [copper-containing] (751 aa).

The first 22 residues, 1–22 (MSLAFGWAAVILLLQTADTASA), serve as a signal peptide directing secretion. N-linked (GlcNAc...) asparagine glycans are attached at residues Asn-61 and Asn-110. The Proton acceptor role is filled by Asp-373. A disulfide bridge connects residues Cys-391 and Cys-417. Tyr-461 acts as the Schiff-base intermediate with substrate; via topaquinone in catalysis. 2',4',5'-topaquinone is present on Tyr-461. 2 residues coordinate Cu(2+): His-510 and His-512. Asp-519, Leu-520, and Asp-521 together coordinate Ca(2+). A glycan (N-linked (GlcNAc...) asparagine) is linked at Asn-538. The Ca(2+) site is built by Glu-562, Phe-653, Asn-656, Glu-658, Asp-664, and Leu-665. His-675 contributes to the Cu(2+) binding site. Asn-745 carries an N-linked (GlcNAc...) asparagine glycan.

This sequence belongs to the copper/topaquinone oxidase family. As to quaternary structure, homodimer; disulfide-linked. Cu(2+) serves as cofactor. Ca(2+) is required as a cofactor. It depends on L-topaquinone as a cofactor. Post-translationally, topaquinone (TPQ) is generated by copper-dependent autoxidation of a specific tyrosyl residue. In terms of processing, N-glycosylated.

Its subcellular location is the secreted. The protein resides in the extracellular space. It is found in the cell membrane. The catalysed reaction is histamine + O2 + H2O = imidazole-4-acetaldehyde + H2O2 + NH4(+). The enzyme catalyses N(tau)-methylhistamine + O2 + H2O = 1-methylimidazole-4-acetaldehyde + H2O2 + NH4(+). It catalyses the reaction putrescine + O2 + H2O = 4-aminobutanal + H2O2 + NH4(+). It carries out the reaction cadaverine + O2 + H2O = 5-aminopentanal + H2O2 + NH4(+). With respect to regulation, inhibited by amiloride and amiloride analogs. Its function is as follows. Catalyzes the oxidative deamination of primary amines to the corresponding aldehydes with the concomitant production of hydrogen peroxide and ammonia. Its preferred substrates in vitro are the diamines histamine and 1-methylhistamine and it could therefore play a role in allergic and immune responses. Has a broad specificity for diamines and can also act on cadaverine and putrescine, two products of amino acid catabolism. It could also act on polyamines, like spermidine and spermine though less efficiently, and regulate various biological processes. The protein is Diamine oxidase [copper-containing] of Mus musculus (Mouse).